The chain runs to 81 residues: Neurotoxin LmNaTx11.1 (81 aa).

Positions 1–18 (MKIVIIFFIAMMAVGVYS) are cleaved as a signal peptide. The LCN-type CS-alpha/beta domain occupies 19 to 80 (KDGYLVKKNG…PTYPSSKTCS (62 aa)). 4 disulfides stabilise this stretch: C29-C79, C33-C56, C42-C61, and C46-C63.

This sequence belongs to the long (4 C-C) scorpion toxin superfamily. Sodium channel inhibitor family. Beta subfamily. Expressed by the venom gland.

The protein localises to the secreted. Functionally, binds voltage-independently at site-4 of sodium channels (Nav) and shift the voltage of activation toward more negative potentials thereby affecting sodium channel activation and promoting spontaneous and repetitive firing. The sequence is that of Neurotoxin LmNaTx11.1 from Lychas mucronatus (Chinese swimming scorpion).